Here is a 275-residue protein sequence, read N- to C-terminus: 2,3,4,5-tetrahydropyridine-2,6-dicarboxylate N-succinyltransferase (275 aa).

Substrate-binding residues include Arg106 and Asp143.

It belongs to the transferase hexapeptide repeat family. In terms of assembly, homotrimer.

It localises to the cytoplasm. The enzyme catalyses (S)-2,3,4,5-tetrahydrodipicolinate + succinyl-CoA + H2O = (S)-2-succinylamino-6-oxoheptanedioate + CoA. Its pathway is amino-acid biosynthesis; L-lysine biosynthesis via DAP pathway; LL-2,6-diaminopimelate from (S)-tetrahydrodipicolinate (succinylase route): step 1/3. The chain is 2,3,4,5-tetrahydropyridine-2,6-dicarboxylate N-succinyltransferase from Cupriavidus pinatubonensis (strain JMP 134 / LMG 1197) (Cupriavidus necator (strain JMP 134)).